The sequence spans 166 residues: Lipoprotein signal peptidase (166 aa).

Helical transmembrane passes span tryptophan 12–glutamine 32, tryptophan 70–serine 90, and alanine 102–valine 122. Residues aspartate 123 and aspartate 141 contribute to the active site. The helical transmembrane segment at phenylalanine 137–leucine 157 threads the bilayer.

The protein belongs to the peptidase A8 family.

The protein resides in the cell inner membrane. The enzyme catalyses Release of signal peptides from bacterial membrane prolipoproteins. Hydrolyzes -Xaa-Yaa-Zaa-|-(S,diacylglyceryl)Cys-, in which Xaa is hydrophobic (preferably Leu), and Yaa (Ala or Ser) and Zaa (Gly or Ala) have small, neutral side chains.. It participates in protein modification; lipoprotein biosynthesis (signal peptide cleavage). Its function is as follows. This protein specifically catalyzes the removal of signal peptides from prolipoproteins. This is Lipoprotein signal peptidase from Salmonella agona (strain SL483).